A 741-amino-acid chain; its full sequence is Linoleate 9S-lipoxygenase (741 aa).

One can recognise a PLAT domain in the interval 1 to 53 (IPGAFYIKNFMQVEFYLKSLTLEDIPNHGTIHFICNSWIYNSKVYKSDRIFFA). A Lipoxygenase domain is found at 56–741 (TYLPSETPAP…SEEGLTFRGI (686 aa)). A disordered region spans residues 108 to 144 (ALARPVLGGSTLPYPRRGRTGRPKTKKDPNSEKPSDF). Residues 123 to 132 (RRGRTGRPKT) show a composition bias toward basic residues. Basic and acidic residues predominate over residues 133–144 (KKDPNSEKPSDF). Fe cation is bound by residues His-407, His-412, His-598, and Asn-602.

Belongs to the lipoxygenase family. In terms of assembly, monomer. The cofactor is Fe cation.

Its subcellular location is the cytoplasm. It carries out the reaction (9Z,12Z)-octadecadienoate + O2 = (9S)-hydroperoxy-(10E,12Z)-octadecadienoate. It catalyses the reaction (9Z,12Z)-octadecadienoate + O2 = (13S)-hydroperoxy-(9Z,11E)-octadecadienoate. The enzyme catalyses (9Z,12Z,15Z)-octadecatrienoate + O2 = (13S)-hydroperoxy-(9Z,11E,15Z)-octadecatrienoate. It functions in the pathway lipid metabolism; oxylipin biosynthesis. Functionally, plant lipoxygenase may be involved in a number of diverse aspects of plant physiology including growth and development, pest resistance, and senescence or responses to wounding. It catalyzes the hydroperoxidation of lipids containing a cis,cis-1,4-pentadiene structure. This Phaseolus vulgaris (Kidney bean) protein is Linoleate 9S-lipoxygenase.